The chain runs to 272 residues: Probable proteasome subunit beta type-5 (272 aa).

Residues 1–61 (MNSIVSKYTQ…KHCLIKMNHG (61 aa)) constitute a propeptide, removed in mature form. The active-site Nucleophile is the threonine 62.

This sequence belongs to the peptidase T1B family. The 26S proteasome consists of a 20S proteasome core and two 19S regulatory subunits. The 20S proteasome core is composed of 28 subunits that are arranged in four stacked rings, resulting in a barrel-shaped structure. The two end rings are each formed by seven alpha subunits, and the two central rings are each formed by seven beta subunits. The catalytic chamber with the active sites is on the inside of the barrel.

The protein resides in the cytoplasm. It is found in the nucleus. It carries out the reaction Cleavage of peptide bonds with very broad specificity.. The proteasome is a multicatalytic proteinase complex which is characterized by its ability to cleave peptides with Arg, Phe, Tyr, Leu, and Glu adjacent to the leaving group at neutral or slightly basic pH. The proteasome has an ATP-dependent proteolytic activity. In Schizosaccharomyces pombe (strain 972 / ATCC 24843) (Fission yeast), this protein is Probable proteasome subunit beta type-5 (pts1).